Reading from the N-terminus, the 265-residue chain is tRNA (guanine-N(7)-)-methyltransferase (265 aa).

Residues 1–40 form a disordered region; sequence MIHDDDPNAPGAPHDDDATAAPASATRAAPAAGDDDDANP. The span at 19 to 32 shows a compositional bias: low complexity; sequence TAAPASATRAAPAA. 4 residues coordinate S-adenosyl-L-methionine: glutamate 95, glutamate 120, aspartate 147, and aspartate 170. Residue aspartate 170 is part of the active site. Residues lysine 174, aspartate 206, and 241 to 244 each bind substrate; that span reads TKFE.

This sequence belongs to the class I-like SAM-binding methyltransferase superfamily. TrmB family.

It catalyses the reaction guanosine(46) in tRNA + S-adenosyl-L-methionine = N(7)-methylguanosine(46) in tRNA + S-adenosyl-L-homocysteine. The protein operates within tRNA modification; N(7)-methylguanine-tRNA biosynthesis. Catalyzes the formation of N(7)-methylguanine at position 46 (m7G46) in tRNA. The protein is tRNA (guanine-N(7)-)-methyltransferase of Burkholderia pseudomallei (strain 1710b).